The chain runs to 292 residues: mRNA export protein 33 (292 aa).

The tract at residues 1–76 is disordered; sequence MPPKKAAKGK…RKRREEEKRA (76 aa). 2 stretches are compositionally biased toward basic and acidic residues: residues 9–26 and 58–76; these read GKGD…KKAA and KDAK…EKRA. The C3H1-type zinc finger occupies 134–172; sequence INTDIVCKFFLEACETGKYGWLWQCPNGNMTCIYKHALP.

The protein localises to the cytoplasm. Functionally, functions as a component of the nuclear pore complex (NPC). NPC components, collectively referred to as nucleoporins (NUPs), can play the role of both NPC structural components and of docking or interaction partners for transiently associated nuclear transport factors. Active directional transport is assured by both, a Phe-Gly (FG) repeat affinity gradient for these transport factors across the NPC and a transport cofactor concentration gradient across the nuclear envelope. Involved in the export of mRNA from the nucleus to the cytoplasm. May play a role in mitotic spindle formation and/or function. The chain is mRNA export protein 33 (mep33) from Schizosaccharomyces pombe (strain 972 / ATCC 24843) (Fission yeast).